The following is a 321-amino-acid chain: Solute carrier family 25 member 33 (321 aa).

Solcar repeat units lie at residues glutamate 9–glutamine 118, asparagine 126–tyrosine 213, and threonine 231–leucine 315. A run of 6 helical transmembrane segments spans residues leucine 12–leucine 32, valine 49–valine 65, glycine 121–valine 141, leucine 190–leucine 210, phenylalanine 233–proline 253, and glutamine 298–aspartate 318.

Belongs to the mitochondrial carrier (TC 2.A.29) family.

It is found in the mitochondrion inner membrane. It carries out the reaction UTP(in) + UDP(out) = UTP(out) + UDP(in). The catalysed reaction is dUTP(out) + UTP(in) = dUTP(in) + UTP(out). It catalyses the reaction 5-methyl-UTP(out) + UTP(in) = 5-methyl-UTP(in) + UTP(out). The enzyme catalyses 5-methyl-UDP(out) + UTP(in) = 5-methyl-UDP(in) + UTP(out). It carries out the reaction UTP(in) + CTP(out) = UTP(out) + CTP(in). The catalysed reaction is CDP(out) + UTP(in) = CDP(in) + UTP(out). It catalyses the reaction dCTP(out) + UTP(in) = dCTP(in) + UTP(out). The enzyme catalyses dCDP(out) + UTP(in) = dCDP(in) + UTP(out). It carries out the reaction UTP(in) + GTP(out) = UTP(out) + GTP(in). The catalysed reaction is UTP(in) + GDP(out) = UTP(out) + GDP(in). It catalyses the reaction dGTP(out) + UTP(in) = dGTP(in) + UTP(out). The enzyme catalyses dGDP(out) + UTP(in) = dGDP(in) + UTP(out). It carries out the reaction ITP(out) + UTP(in) = ITP(in) + UTP(out). Functionally, mitochondrial transporter that imports/exports pyrimidine nucleotides into and from mitochondria. Selectively transports uridine, thymidine, guanosine, cytosine and inosine (deoxy)nucleoside di- and triphosphates by an antiport mechanism. May import (deoxy)nucleoside triphosphates in exchange for intramitochondrial (deoxy)nucleoside diphosphates, thus providing precursors necessary for de novo synthesis of mitochondrial DNA and RNA while exporting products of their catabolism. Participates in mitochondrial genome maintenance, regulation of mitochondrial membrane potential and mitochondrial respiration. Upon INS or IGF1 stimulation regulates cell growth and proliferation by controlling mitochondrial DNA replication and transcription, the ratio of mitochondria-to nuclear-encoded components of the electron transport chain resulting in control of mitochondrial ROS production. Participates in dendritic cell endocytosis and may associate with mitochondrial oxidative phosphorylation. The protein is Solute carrier family 25 member 33 (SLC25A33) of Bos taurus (Bovine).